The chain runs to 457 residues: F-box only protein 13 (457 aa).

Residues 64–110 (EFPMDDLNDDVLERVLSWLPTSCFFRMSSVCKRWKSSQTSKSFKLAC) enclose the F-box domain.

The chain is F-box only protein 13 (FBX13) from Arabidopsis thaliana (Mouse-ear cress).